The sequence spans 492 residues: Ketol-acid reductoisomerase (NADP(+)) (492 aa).

One can recognise a KARI N-terminal Rossmann domain in the interval 15 to 208 (AQLGKCRFMA…GGHRAGVLES (194 aa)). NADP(+) is bound by residues 45-48 (CGAQ), Arg68, Arg76, Ser78, and 108-110 (DKQ). Residue His132 is part of the active site. An NADP(+)-binding site is contributed by Gly158. KARI C-terminal knotted domains follow at residues 209–344 (SFVA…NAPQ) and 345–485 (FEGK…MTDM). Positions 217, 221, 389, and 393 each coordinate Mg(2+). Ser414 is a substrate binding site.

Belongs to the ketol-acid reductoisomerase family. It depends on Mg(2+) as a cofactor.

The catalysed reaction is (2R)-2,3-dihydroxy-3-methylbutanoate + NADP(+) = (2S)-2-acetolactate + NADPH + H(+). It catalyses the reaction (2R,3R)-2,3-dihydroxy-3-methylpentanoate + NADP(+) = (S)-2-ethyl-2-hydroxy-3-oxobutanoate + NADPH + H(+). Its pathway is amino-acid biosynthesis; L-isoleucine biosynthesis; L-isoleucine from 2-oxobutanoate: step 2/4. It functions in the pathway amino-acid biosynthesis; L-valine biosynthesis; L-valine from pyruvate: step 2/4. Functionally, involved in the biosynthesis of branched-chain amino acids (BCAA). Catalyzes an alkyl-migration followed by a ketol-acid reduction of (S)-2-acetolactate (S2AL) to yield (R)-2,3-dihydroxy-isovalerate. In the isomerase reaction, S2AL is rearranged via a Mg-dependent methyl migration to produce 3-hydroxy-3-methyl-2-ketobutyrate (HMKB). In the reductase reaction, this 2-ketoacid undergoes a metal-dependent reduction by NADPH to yield (R)-2,3-dihydroxy-isovalerate. The polypeptide is Ketol-acid reductoisomerase (NADP(+)) (Yersinia enterocolitica serotype O:8 / biotype 1B (strain NCTC 13174 / 8081)).